A 210-amino-acid chain; its full sequence is Nucleoside triphosphate pyrophosphatase (210 aa).

Asp80 functions as the Proton acceptor in the catalytic mechanism.

The protein belongs to the Maf family. The cofactor is a divalent metal cation.

It localises to the cytoplasm. It catalyses the reaction a ribonucleoside 5'-triphosphate + H2O = a ribonucleoside 5'-phosphate + diphosphate + H(+). It carries out the reaction a 2'-deoxyribonucleoside 5'-triphosphate + H2O = a 2'-deoxyribonucleoside 5'-phosphate + diphosphate + H(+). Its function is as follows. Nucleoside triphosphate pyrophosphatase. May have a dual role in cell division arrest and in preventing the incorporation of modified nucleotides into cellular nucleic acids. This chain is Nucleoside triphosphate pyrophosphatase, found in Mycobacterium sp. (strain JLS).